We begin with the raw amino-acid sequence, 516 residues long: Probable cytochrome P450 9f2 (516 aa).

Residue C460 participates in heme binding.

Belongs to the cytochrome P450 family. Heme is required as a cofactor.

It localises to the endoplasmic reticulum membrane. The protein localises to the microsome membrane. In terms of biological role, may be involved in the metabolism of insect hormones and in the breakdown of synthetic insecticides. The sequence is that of Probable cytochrome P450 9f2 (Cyp9f2) from Drosophila melanogaster (Fruit fly).